Here is a 723-residue protein sequence, read N- to C-terminus: Bifunctional lysine-specific demethylase and histidyl-hydroxylase NO66 (723 aa).

2 disordered regions span residues 13-34 and 48-213; these read KKTA…QKAA and SAVK…APSC. Positions 14–31 are enriched in basic residues; that stretch reads KTAKKPAKKTTKQNRQKQ. Residues 49–72 show a composition bias toward low complexity; the sequence is AVKQNNGAKGKAKANGVKGNAKAQ. Acidic residues-rich tracts occupy residues 88–106 and 114–129; these read ESVD…EDNE and EDDY…EFEE. The span at 133 to 155 shows a compositional bias: low complexity; it reads NSPSGSCSCSASSGSSNTENSPP. Positions 190–199 are enriched in basic and acidic residues; sequence EQKEGKELSK. Low complexity predominate over residues 204-213; sequence KSAPAAAPSC. In terms of domain architecture, JmjC spans 379-518; sequence NPSTYLKGLR…NLMEALMPAV (140 aa). Fe cation is bound by residues His-419, Asp-421, and His-484.

This sequence belongs to the ROX family. NO66 subfamily. Requires Fe(2+) as cofactor.

The protein resides in the nucleus. The catalysed reaction is N(6),N(6)-dimethyl-L-lysyl(36)-[histone H3] + 2 2-oxoglutarate + 2 O2 = L-lysyl(36)-[histone H3] + 2 formaldehyde + 2 succinate + 2 CO2. Its function is as follows. Oxygenase that can act as both a histone lysine demethylase and a ribosomal histidine hydroxylase. Specifically demethylates 'Lys-4' (H3K4me) and 'Lys-36' (H3K36me) of histone H3, thereby playing a central role in histone code. In Drosophila grimshawi (Hawaiian fruit fly), this protein is Bifunctional lysine-specific demethylase and histidyl-hydroxylase NO66.